The following is a 312-amino-acid chain: GDSL esterase/lipase At2g38180 (312 aa).

An N-terminal signal peptide occupies residues methionine 1–threonine 22. The N-linked (GlcNAc...) asparagine glycan is linked to asparagine 79. The disordered stretch occupies residues glutamate 285 to leucine 312.

It belongs to the 'GDSL' lipolytic enzyme family.

It is found in the secreted. The protein is GDSL esterase/lipase At2g38180 of Arabidopsis thaliana (Mouse-ear cress).